The primary structure comprises 1441 residues: ABC transporter G family member 51 (1441 aa).

Residues 52 to 71 form a disordered region; that stretch reads VLPDPDGLGGGDGGGRGEGQ. Positions 58 to 69 are enriched in gly residues; the sequence is GLGGGDGGGRGE. One can recognise an ABC transporter 1 domain in the interval 154–428; sequence LISSHLLRPD…FKSLGFSLPP (275 aa). 187-194 is a binding site for ATP; that stretch reads GPPASGKS. One can recognise an ABC transmembrane type-2 1 domain in the interval 505–718; it reads SLVRACFARE…AQRAVSVNEF (214 aa). 6 consecutive transmembrane segments (helical) span residues 523 to 543, 558 to 578, 615 to 635, 642 to 662, 668 to 688, and 751 to 771; these read FLYTFRTCQVAFVGIITSTLF, LYLACLFFGLVHMMFNGFTEM, FIEAVVWSCVVYYTVGFAPTV, MLLLFSIHQMALGLFRMMGAI, IASTFGSAVLLAIFLLGGFVV, and FWIGVGVLLAYSIFFNIMFTL. Positions 838–1090 constitute an ABC transporter 2 domain; that stretch reads MTFHNVNYYV…DMINYFQGIP (253 aa). 883–890 contacts ATP; it reads GASGSGKT. Positions 1163-1380 constitute an ABC transmembrane type-2 2 domain; sequence TQFMVCLRKQ…TLRGVITSQL (218 aa). Helical transmembrane passes span 1184–1204, 1214–1234, 1271–1291, 1300–1320, 1330–1350, 1355–1375, and 1413–1433; these read VVRLFFTSVAAIIFGSIFWNV, ILLLMGALYAACLFLGVNNAS, VEIPYIAVQTLIFGLITYFMV, LVLYLIYMFLTFTYFTFYGMV, MASVVSSAFYSLWNLLSGFLI, IPGWWIWFYYICPVAWTLRGV, and ATVAVLVAFSVFFFSIYAISI.

Belongs to the ABC transporter superfamily. ABCG family. PDR (TC 3.A.1.205) subfamily.

The protein localises to the membrane. In terms of biological role, may be a general defense protein. This chain is ABC transporter G family member 51, found in Oryza sativa subsp. japonica (Rice).